A 145-amino-acid polypeptide reads, in one-letter code: D-aminoacyl-tRNA deacylase (145 aa).

Positions Gly-137 to Pro-138 match the Gly-cisPro motif, important for rejection of L-amino acids motif.

Belongs to the DTD family. Homodimer.

The protein localises to the cytoplasm. The catalysed reaction is glycyl-tRNA(Ala) + H2O = tRNA(Ala) + glycine + H(+). It catalyses the reaction a D-aminoacyl-tRNA + H2O = a tRNA + a D-alpha-amino acid + H(+). In terms of biological role, an aminoacyl-tRNA editing enzyme that deacylates mischarged D-aminoacyl-tRNAs. Also deacylates mischarged glycyl-tRNA(Ala), protecting cells against glycine mischarging by AlaRS. Acts via tRNA-based rather than protein-based catalysis; rejects L-amino acids rather than detecting D-amino acids in the active site. By recycling D-aminoacyl-tRNA to D-amino acids and free tRNA molecules, this enzyme counteracts the toxicity associated with the formation of D-aminoacyl-tRNA entities in vivo and helps enforce protein L-homochirality. The protein is D-aminoacyl-tRNA deacylase of Lactobacillus acidophilus (strain ATCC 700396 / NCK56 / N2 / NCFM).